A 150-amino-acid polypeptide reads, in one-letter code: Ribosomal RNA large subunit methyltransferase H (150 aa).

S-adenosyl-L-methionine contacts are provided by residues L68, G97, and 116–121 (LSAMTL).

The protein belongs to the RNA methyltransferase RlmH family. Homodimer.

The protein resides in the cytoplasm. The enzyme catalyses pseudouridine(1915) in 23S rRNA + S-adenosyl-L-methionine = N(3)-methylpseudouridine(1915) in 23S rRNA + S-adenosyl-L-homocysteine + H(+). Its function is as follows. Specifically methylates the pseudouridine at position 1915 (m3Psi1915) in 23S rRNA. In Prochlorococcus marinus (strain MIT 9303), this protein is Ribosomal RNA large subunit methyltransferase H.